A 442-amino-acid chain; its full sequence is Histidine--tRNA ligase (442 aa).

This sequence belongs to the class-II aminoacyl-tRNA synthetase family. As to quaternary structure, homodimer.

It is found in the cytoplasm. It carries out the reaction tRNA(His) + L-histidine + ATP = L-histidyl-tRNA(His) + AMP + diphosphate + H(+). This Helicobacter pylori (strain HPAG1) protein is Histidine--tRNA ligase.